Reading from the N-terminus, the 485-residue chain is Adenosylhomocysteinase (485 aa).

The substrate site is built by Thr-64, Asp-139, and Glu-205. 206-208 contributes to the NAD(+) binding site; sequence TTT. Substrate is bound by residues Lys-235 and Asp-239. Residues Asn-240, 269 to 274, Glu-292, Asn-327, and 348 to 350 each bind NAD(+); these read GYGDVG and IGH.

This sequence belongs to the adenosylhomocysteinase family. As to quaternary structure, homotetramer. NAD(+) is required as a cofactor.

The catalysed reaction is S-adenosyl-L-homocysteine + H2O = L-homocysteine + adenosine. It participates in amino-acid biosynthesis; L-homocysteine biosynthesis; L-homocysteine from S-adenosyl-L-homocysteine: step 1/1. Functionally, adenosylhomocysteine is a competitive inhibitor of S-adenosyl-L-methionine-dependent methyl transferase reactions; therefore adenosylhomocysteinase may play a key role in the control of methylations via regulation of the intracellular concentration of adenosylhomocysteine. The chain is Adenosylhomocysteinase (SAHH) from Mesembryanthemum crystallinum (Common ice plant).